A 374-amino-acid chain; its full sequence is Probable neutral protease 2 homolog TRV_05367 (374 aa).

Residues 1–19 (MQVIVALAALGSLAAPALG) form the signal peptide. The propeptide occupies 20–189 (FSIPRGVPVS…RGPLTRINKR (170 aa)). 2 disulfides stabilise this stretch: cysteine 197–cysteine 267 and cysteine 274–cysteine 292. Histidine 317 contacts Zn(2+). Glutamate 318 is a catalytic residue. Residues histidine 321 and aspartate 332 each contribute to the Zn(2+) site.

This sequence belongs to the peptidase M35 family. The cofactor is Zn(2+).

It is found in the secreted. It carries out the reaction Preferential cleavage of bonds with hydrophobic residues in P1'. Also 3-Asn-|-Gln-4 and 8-Gly-|-Ser-9 bonds in insulin B chain.. Its function is as follows. Probable secreted metalloprotease that shows high activities on basic nuclear substrates such as histone and protamine. May be involved in virulence. This is Probable neutral protease 2 homolog TRV_05367 from Trichophyton verrucosum (strain HKI 0517).